Consider the following 1520-residue polypeptide: Myosin-5 (1520 aa).

The Myosin N-terminal SH3-like domain occupies 7-56 (IVGSHVWVEDPHLAWIDGEVTRIDGINVHVKTKKGKTVVTNVYFPKDTEA). A Myosin motor domain is found at 59 to 729 (GGVDDMTKLS…QMAELDARRA (671 aa)). ATP is bound by residues 153–160 (GESGAGKT) and 206–214 (NNNSSRFGK). 4 actin-binding regions span residues 492–526 (LIEKKPGGIISLLDEACMFPKSTHETFSQKLFQTF), 528–551 (EHERFAKPKLSRTDFTISHYAGEV), 586–610 (FHALHEDSSRSSKFSSIGSRFKQQL), and 610–632 (LHSLMESLNGTEPHYIRCIKPNN). IQ domains lie at 732 to 761 (LGNAARVIQRQFRTCMARKNYRSIRNAAIV), 755 to 784 (IRNAAIVLQSFLRGEIARAVHKKLRIEAAA), 780 to 809 (IEAAALRVQKNFRRYVDRKSFVTTRSSTIV), 803 to 832 (TRSSTIVLQTGLRAMIARSEFRLRRQRKAA), 828 to 857 (QRKAAIVLQAHWRGRQAFSYYTRLQKAAIV), and 851 to 880 (LQKAAIVTQCAWRCRLARRELRMLKMAARD). Positions 881-1047 (TGALKDAKNK…ESENKVLRQQ (167 aa)) form a coiled coil. The disordered stretch occupies residues 1062–1100 (PKTTIIQRTPEKDTFSNGETTQLQEPETEDRPQKSLNQK). Residues 1076–1086 (FSNGETTQLQE) show a composition bias toward polar residues. The Dilute domain occupies 1148–1463 (NRIIETIASA…IATMRAEVSD (316 aa)).

This sequence belongs to the TRAFAC class myosin-kinesin ATPase superfamily. Myosin family. Plant myosin class XI subfamily. Homodimer. Interacts with MYOB1 and MYOB2. Interacts with PHOX1.

The protein resides in the cytoplasm. In terms of biological role, myosin heavy chain that is required for the cell cycle-regulated transport of various organelles and proteins for their segregation. Functions by binding with its tail domain to receptor proteins on organelles and exerting force with its N-terminal motor domain against actin filaments, thereby transporting its cargo along polarized actin cables. Contributes to the trafficking of Golgi stacks, mitochondria and peroxisomes. Required for development of pavement cells, trichomes, and stigmatic papillae. This chain is Myosin-5 (XI-1), found in Arabidopsis thaliana (Mouse-ear cress).